A 246-amino-acid polypeptide reads, in one-letter code: Bis(5'-nucleosyl)-tetraphosphatase PrpE [asymmetrical] (246 aa).

The protein belongs to the PrpE family. The cofactor is Ni(2+).

The catalysed reaction is P(1),P(4)-bis(5'-guanosyl) tetraphosphate + H2O = GMP + GTP + 2 H(+). Asymmetrically hydrolyzes Ap4p to yield AMP and ATP. This is Bis(5'-nucleosyl)-tetraphosphatase PrpE [asymmetrical] from Bacillus cereus (strain Q1).